A 412-amino-acid chain; its full sequence is Alanyl-tRNA editing protein Aarsd1 (412 aa).

The Zn(2+) site is built by His-109 and His-113. Position 174 is a phosphoserine (Ser-174). Zn(2+) contacts are provided by Cys-209 and His-213.

The protein belongs to the class-II aminoacyl-tRNA synthetase family. Alax-L subfamily. Zn(2+) is required as a cofactor.

Its subcellular location is the cytoplasm. Functions in trans to edit the amino acid moiety from incorrectly charged Ser-tRNA(Ala). This chain is Alanyl-tRNA editing protein Aarsd1 (Aarsd1), found in Mus musculus (Mouse).